A 367-amino-acid chain; its full sequence is Undecaprenyl-phosphate alpha-N-acetylglucosaminyl 1-phosphate transferase (367 aa).

The next 9 membrane-spanning stretches (helical) occupy residues 3 to 23 (LLTA…FIFL), 45 to 65 (GVIP…MFGL), 69 to 89 (YIPH…VGAM), 129 to 149 (WELV…WAAI), 158 to 178 (IDGL…LILW), 187 to 207 (MWCF…LGIL), 213 to 233 (VFMG…LLLE), 242 to 262 (ISPV…VAIM), and 318 to 338 (VPEW…GYCI).

Belongs to the glycosyltransferase 4 family. WecA subfamily. Mg(2+) is required as a cofactor. Mn(2+) serves as cofactor.

The protein resides in the cell inner membrane. The enzyme catalyses di-trans,octa-cis-undecaprenyl phosphate + UDP-N-acetyl-alpha-D-glucosamine = N-acetyl-alpha-D-glucosaminyl-di-trans,octa-cis-undecaprenyl diphosphate + UMP. It participates in bacterial outer membrane biogenesis; LPS O-antigen biosynthesis. Its pathway is bacterial outer membrane biogenesis; enterobacterial common antigen biosynthesis. With respect to regulation, inhibited by tunicamycin. In terms of biological role, catalyzes the transfer of the GlcNAc-1-phosphate moiety from UDP-GlcNAc onto the carrier lipid undecaprenyl phosphate (C55-P), yielding GlcNAc-pyrophosphoryl-undecaprenyl (GlcNAc-PP-C55). The polypeptide is Undecaprenyl-phosphate alpha-N-acetylglucosaminyl 1-phosphate transferase (Salmonella typhimurium (strain LT2 / SGSC1412 / ATCC 700720)).